An 84-amino-acid chain; its full sequence is MERGYRKVRIGTVVSNKMQKTIVVAVEDRVRHPLYGKTIKRTKKFKVHDENNVCNVGDIVKIMETRPLSKEKRWRLVEIVKRAE.

It belongs to the universal ribosomal protein uS17 family. In terms of assembly, part of the 30S ribosomal subunit.

Functionally, one of the primary rRNA binding proteins, it binds specifically to the 5'-end of 16S ribosomal RNA. The protein is Small ribosomal subunit protein uS17 of Thermoanaerobacter pseudethanolicus (strain ATCC 33223 / 39E) (Clostridium thermohydrosulfuricum).